Reading from the N-terminus, the 304-residue chain is Acetaldehyde dehydrogenase (304 aa).

The Acyl-thioester intermediate role is filled by Cys131. Residues 162–170 and Asn273 contribute to the NAD(+) site; that span reads SAGPGTRKN.

Belongs to the acetaldehyde dehydrogenase family.

The catalysed reaction is acetaldehyde + NAD(+) + CoA = acetyl-CoA + NADH + H(+). This chain is Acetaldehyde dehydrogenase, found in Polaromonas naphthalenivorans (strain CJ2).